Consider the following 488-residue polypeptide: Glutamyl-tRNA(Gln) amidotransferase subunit A (488 aa).

Catalysis depends on charge relay system residues Lys77 and Ser152. Ser176 (acyl-ester intermediate) is an active-site residue.

The protein belongs to the amidase family. GatA subfamily. Heterotrimer of A, B and C subunits.

It carries out the reaction L-glutamyl-tRNA(Gln) + L-glutamine + ATP + H2O = L-glutaminyl-tRNA(Gln) + L-glutamate + ADP + phosphate + H(+). Functionally, allows the formation of correctly charged Gln-tRNA(Gln) through the transamidation of misacylated Glu-tRNA(Gln) in organisms which lack glutaminyl-tRNA synthetase. The reaction takes place in the presence of glutamine and ATP through an activated gamma-phospho-Glu-tRNA(Gln). The protein is Glutamyl-tRNA(Gln) amidotransferase subunit A of Streptococcus agalactiae serotype III (strain NEM316).